We begin with the raw amino-acid sequence, 204 residues long: High frequency lysogenization protein HflD homolog (204 aa).

It belongs to the HflD family.

Its subcellular location is the cytoplasm. The protein resides in the cell inner membrane. The sequence is that of High frequency lysogenization protein HflD homolog from Shewanella woodyi (strain ATCC 51908 / MS32).